Consider the following 155-residue polypeptide: Ribosomal RNA large subunit methyltransferase H (155 aa).

Residues Ile-71, Gly-103, and 122-127 (FGRMVW) each bind S-adenosyl-L-methionine.

The protein belongs to the RNA methyltransferase RlmH family. Homodimer.

It is found in the cytoplasm. The enzyme catalyses pseudouridine(1915) in 23S rRNA + S-adenosyl-L-methionine = N(3)-methylpseudouridine(1915) in 23S rRNA + S-adenosyl-L-homocysteine + H(+). In terms of biological role, specifically methylates the pseudouridine at position 1915 (m3Psi1915) in 23S rRNA. This is Ribosomal RNA large subunit methyltransferase H from Cereibacter sphaeroides (strain ATCC 17025 / ATH 2.4.3) (Rhodobacter sphaeroides).